The primary structure comprises 374 residues: GTPase Obg (374 aa).

One can recognise an Obg domain in the interval 1–159; the sequence is MKFIDEVRIH…RDLRLELRLL (159 aa). The region spanning 160–333 is the OBG-type G domain; that stretch reads ADVGLLGLPN…LVYAIWQALP (174 aa). GTP is bound by residues 166-173, 191-195, 213-216, 283-286, and 314-316; these read GLPNAGKS, FTTLY, DIPG, NKSD, and SAA. S173 and T193 together coordinate Mg(2+). Positions 337–374 are disordered; it reads PAADPTQTEDWGDESDAGERLENWEGDDLDADWEEEQV. Positions 360–374 are enriched in acidic residues; it reads WEGDDLDADWEEEQV.

The protein belongs to the TRAFAC class OBG-HflX-like GTPase superfamily. OBG GTPase family. In terms of assembly, monomer. The cofactor is Mg(2+).

It localises to the cytoplasm. In terms of biological role, an essential GTPase which binds GTP, GDP and possibly (p)ppGpp with moderate affinity, with high nucleotide exchange rates and a fairly low GTP hydrolysis rate. Plays a role in control of the cell cycle, stress response, ribosome biogenesis and in those bacteria that undergo differentiation, in morphogenesis control. The sequence is that of GTPase Obg from Acidithiobacillus ferrooxidans (strain ATCC 23270 / DSM 14882 / CIP 104768 / NCIMB 8455) (Ferrobacillus ferrooxidans (strain ATCC 23270)).